The chain runs to 206 residues: Stage III sporulation protein AF (206 aa).

The next 2 helical transmembrane spans lie at 1 to 21 (MSFL…AIVI) and 34 to 54 (AKMV…FKLF).

It is found in the cell membrane. The protein is Stage III sporulation protein AF (spoIIIAF) of Bacillus subtilis (strain 168).